The chain runs to 379 residues: MFMNCRRVKKWHFLQLLSMCCVMSVLMVCWEHVDHHVVSHVKSYSYRYLINSYDFINKSLSVSPEEAARFGSFPYLLDRRDVCKNKDVLLLLFVKSSPGNFKRRQAIRSTWGNESYISQELGVVVKVVFAMGVRPDRSGHKTMQRELRKEHMAHHDLIQQDFLDTFHNLTVKLLLQFRWTHENCAHAHFLMSADDDVFIHVPNLVHYLQELKSQNVRNLWVGHVHRGAPPVRKRDSKYYMPFDMYQWSSYPDYTAGAGYVVSGDVAAKIYQATQSLNASMYIDDVFMGICAIAAGVSPQEHVYFSGEGKTPYHPCIYEKMITSHGHEGDIRYLWKAATGPQVEGISSGLLGKLYCAAVKMTLLCKPYFTNTYSCMAAFT.

Topologically, residues 1 to 12 (MFMNCRRVKKWH) are cytoplasmic. A helical; Signal-anchor for type II membrane protein transmembrane segment spans residues 13 to 30 (FLQLLSMCCVMSVLMVCW). Residues 31-379 (EHVDHHVVSH…NTYSCMAAFT (349 aa)) are Lumenal-facing. Asparagine 57, asparagine 113, asparagine 168, and asparagine 277 each carry an N-linked (GlcNAc...) asparagine glycan.

This sequence belongs to the glycosyltransferase 31 family.

It is found in the golgi apparatus membrane. It catalyses the reaction a beta-D-Gal-(1-&gt;4)-beta-D-Glc-(1&lt;-&gt;1)-Cer(d18:1(4E)) + UDP-N-acetyl-alpha-D-glucosamine = a beta-D-GlcNAc-(1-&gt;3)-beta-D-Gal-(1-&gt;4)-beta-D-Glc-(1&lt;-&gt;1)-Cer(d18:1(4E)) + UDP + H(+). It carries out the reaction a neolactoside nLc4Cer(d18:1(4E)) + UDP-N-acetyl-alpha-D-glucosamine = a neolactoside IV(3)-beta-GlcNAc-nLc4Cer(d18:1(4E)) + UDP + H(+). The protein operates within protein modification; protein glycosylation. Functionally, beta-1,3-N-acetylglucosaminyltransferase that plays a key role in the synthesis of lacto- or neolacto-series carbohydrate chains on glycolipids. In Danio rerio (Zebrafish), this protein is Lactosylceramide 1,3-N-acetyl-beta-D-glucosaminyltransferase A (b3gnt5a).